A 405-amino-acid chain; its full sequence is Nuclear hormone receptor family member nhr-199 (405 aa).

The segment at residues 20-111 (IPYCLICSEV…MGMQRSSVQQ (92 aa)) is a DNA-binding region (nuclear receptor). 2 consecutive NR C4-type zinc fingers follow at residues 23 to 44 (CLIC…CRAC) and 60 to 94 (CGRN…CKAC). The 251-residue stretch at 126–376 (RGKPVLNKLR…PFSRIHGNQK (251 aa)) folds into the NR LBD domain.

The protein belongs to the nuclear hormone receptor family.

It is found in the nucleus. Its function is as follows. Orphan nuclear receptor. The sequence is that of Nuclear hormone receptor family member nhr-199 (nhr-199) from Caenorhabditis elegans.